A 307-amino-acid polypeptide reads, in one-letter code: MSTPTTFRPVLERIAEEIERTPGSGRPADYIPALAARDPRRFGMAVAELDGTVYGVGDWREPFSAQSLTKVFTLALDLAREGDALWEHVGREPSGNPFNSLVQLEYENGIPRNPFINAGALVVTDRLHTRTGDAAGELLAFLRAESGNPDLGHDEEVAASEAAHGDRNAALAHFMASYGNIDNPVPVLLDQYFRQCSVAASCADLALATGFLARHGIRADGTRLLSRSRAKQINAVMLTCGTYDAAGDFAHRVGLPGKSGVGGGIIAVVPGHCTLCVWGPGLDERGNSVAGVAALDRFTTLTGLSVF.

The substrate site is built by Ser-67, Asn-117, Glu-161, Asn-168, Tyr-192, Tyr-243, and Val-261.

It belongs to the glutaminase family. Homotetramer.

The catalysed reaction is L-glutamine + H2O = L-glutamate + NH4(+). In Streptomyces coelicolor (strain ATCC BAA-471 / A3(2) / M145), this protein is Glutaminase.